Consider the following 209-residue polypeptide: Outer-membrane lipoprotein carrier protein (209 aa).

The first 21 residues, Met1–Ala21, serve as a signal peptide directing secretion.

This sequence belongs to the LolA family. Monomer.

It is found in the periplasm. Its function is as follows. Participates in the translocation of lipoproteins from the inner membrane to the outer membrane. Only forms a complex with a lipoprotein if the residue after the N-terminal Cys is not an aspartate (The Asp acts as a targeting signal to indicate that the lipoprotein should stay in the inner membrane). In Xanthomonas axonopodis pv. citri (strain 306), this protein is Outer-membrane lipoprotein carrier protein.